The following is a 177-amino-acid chain: Nucleoside triphosphate/diphosphate phosphatase (177 aa).

The Proton donor role is filled by arginine 23. 6 residues coordinate Mg(2+): asparagine 87, aspartate 103, aspartate 105, aspartate 107, aspartate 120, and glutamate 123.

It belongs to the Ntdp family. Requires Mg(2+) as cofactor.

It carries out the reaction a ribonucleoside 5'-triphosphate + H2O = a ribonucleoside 5'-diphosphate + phosphate + H(+). The catalysed reaction is a ribonucleoside 5'-diphosphate + H2O = a ribonucleoside 5'-phosphate + phosphate + H(+). Its function is as follows. Has nucleoside phosphatase activity towards nucleoside triphosphates and nucleoside diphosphates. This is Nucleoside triphosphate/diphosphate phosphatase from Streptococcus sanguinis (strain SK36).